The primary structure comprises 131 residues: uncharacterized protein (131 aa).

Positions 1–19 (MRESLFIIFFQFVCHSSNS) are cleaved as a signal peptide. 2 helical membrane-spanning segments follow: residues 33-53 (PLLT…ALFF) and 111-131 (VSFN…FFLF).

Its subcellular location is the membrane. This is an uncharacterized protein from Saccharomyces cerevisiae (strain ATCC 204508 / S288c) (Baker's yeast).